A 650-amino-acid chain; its full sequence is Macrolide export ATP-binding/permease protein MacB (650 aa).

An ABC transporter domain is found at 5–243 (LELKDIRRSY…AGGTEPVVNT (239 aa)). 41 to 48 (GASGSGKS) provides a ligand contact to ATP. Helical transmembrane passes span 273–293 (LLTM…VVVG), 523–543 (LFLT…VMNI), 554–574 (ANDI…HLFF), 580–600 (VLPA…AFTL), and 613–633 (PLAL…FGWL).

The protein belongs to the ABC transporter superfamily. Macrolide exporter (TC 3.A.1.122) family. Homodimer. Part of the tripartite efflux system MacAB-TolC, which is composed of an inner membrane transporter, MacB, a periplasmic membrane fusion protein, MacA, and an outer membrane component, TolC. The complex forms a large protein conduit and can translocate molecules across both the inner and outer membranes. Interacts with MacA.

It localises to the cell inner membrane. Functionally, part of the tripartite efflux system MacAB-TolC. MacB is a non-canonical ABC transporter that contains transmembrane domains (TMD), which form a pore in the inner membrane, and an ATP-binding domain (NBD), which is responsible for energy generation. Confers resistance against macrolides. This Shigella dysenteriae serotype 1 (strain Sd197) protein is Macrolide export ATP-binding/permease protein MacB.